Consider the following 148-residue polypeptide: Deoxyuridine 5'-triphosphate nucleotidohydrolase (148 aa).

Residues 67–69 (RSG), Asn80, 84–86 (LID), and Met94 contribute to the substrate site.

Belongs to the dUTPase family. The cofactor is Mg(2+).

It catalyses the reaction dUTP + H2O = dUMP + diphosphate + H(+). It participates in pyrimidine metabolism; dUMP biosynthesis; dUMP from dCTP (dUTP route): step 2/2. Functionally, this enzyme is involved in nucleotide metabolism: it produces dUMP, the immediate precursor of thymidine nucleotides and it decreases the intracellular concentration of dUTP so that uracil cannot be incorporated into DNA. This Burkholderia thailandensis (strain ATCC 700388 / DSM 13276 / CCUG 48851 / CIP 106301 / E264) protein is Deoxyuridine 5'-triphosphate nucleotidohydrolase.